Reading from the N-terminus, the 176-residue chain is Japanin-like-RS (176 aa).

The first 24 residues, Met1–Gly24, serve as a signal peptide directing secretion. 2 disulfide bridges follow: Cys52–Cys174 and Cys138–Cys162. Residue Asn155 is glycosylated (N-linked (GlcNAc...) asparagine).

The protein belongs to the calycin superfamily. Lipocalin family. In terms of assembly, homodimer; non-disulfide-linked. Each monomer accommodates one molecule of cholesterol in a pocket. In terms of tissue distribution, expressed in salivary glands.

The protein resides in the secreted. In terms of biological role, salivary tick protein that modulates host immune response. This protein blocks dendritic cell (DC) differentiation from monocytes. In addition, it inhibits up-regulation of costimulatory molecules and pro-inflammatory cytokines in response to stimuli and promotes up-regulation of co-inhibitory molecules and the anti-inflammatory cytokine interleukin-10. It has a pocket to accomodate cholesterol, which may have immune-modulatory roles, either directly or through interactions with the host gut microbiota. This chain is Japanin-like-RS, found in Rhipicephalus sanguineus (Brown dog tick).